The primary structure comprises 61 residues: Large ribosomal subunit protein bL32 (61 aa).

A compositionally biased stretch (basic residues) spans 1–22 (MAVPKKKTSKSRRDMRRSHHAL). Positions 1–27 (MAVPKKKTSKSRRDMRRSHHALKPSAY) are disordered.

It belongs to the bacterial ribosomal protein bL32 family.

In Rhodospirillum rubrum (strain ATCC 11170 / ATH 1.1.1 / DSM 467 / LMG 4362 / NCIMB 8255 / S1), this protein is Large ribosomal subunit protein bL32.